Here is a 187-residue protein sequence, read N- to C-terminus: UPF0398 protein LBA1157 (187 aa).

It belongs to the UPF0398 family.

This chain is UPF0398 protein LBA1157, found in Lactobacillus acidophilus (strain ATCC 700396 / NCK56 / N2 / NCFM).